A 114-amino-acid chain; its full sequence is U17-barytoxin-Tl1d (114 aa).

The signal sequence occupies residues 1–20 (MKTIIVFLSLLVLATKFGDA). Residues 21-74 (NEGVNQEQMKEVIQNEFREDFLNEMAPMSLLQQLEAIESTLLEKEADRNSRQKR) constitute a propeptide that is removed on maturation. Cystine bridges form between Cys-75/Cys-88, Cys-82/Cys-93, and Cys-87/Cys-108.

This sequence belongs to the neurotoxin 14 (magi-1) family. 03 (ICK-30-40) subfamily. As to expression, expressed by the venom gland.

The protein localises to the secreted. Functionally, ion channel inhibitor. This is U17-barytoxin-Tl1d from Trittame loki (Brush-footed trapdoor spider).